The following is a 276-amino-acid chain: NH(3)-dependent NAD(+) synthetase (276 aa).

ATP is bound at residue 43–50; that stretch reads GISGGVDS. Mg(2+) is bound at residue D49. Deamido-NAD(+) is bound at residue R146. An ATP-binding site is contributed by T166. Residue E171 coordinates Mg(2+). Residues K179 and D186 each coordinate deamido-NAD(+). K195 and T217 together coordinate ATP. 266-267 is a binding site for deamido-NAD(+); sequence HK.

It belongs to the NAD synthetase family. In terms of assembly, homodimer.

The catalysed reaction is deamido-NAD(+) + NH4(+) + ATP = AMP + diphosphate + NAD(+) + H(+). It participates in cofactor biosynthesis; NAD(+) biosynthesis; NAD(+) from deamido-NAD(+) (ammonia route): step 1/1. Its function is as follows. Catalyzes the ATP-dependent amidation of deamido-NAD to form NAD. Uses ammonia as a nitrogen source. The sequence is that of NH(3)-dependent NAD(+) synthetase from Vibrio vulnificus (strain YJ016).